Here is a 331-residue protein sequence, read N- to C-terminus: Protein-methionine-sulfoxide reductase catalytic subunit MsrP (331 aa).

The tat-type signal signal peptide spans 1-57; it reads MLIKKTLRAALAGDDIPRSEITPRAVFEHRRRILQAAGAAAAGGLVGAHGLALAAYA. Mo-molybdopterin contacts are provided by residues asparagine 90, 93–94, cysteine 148, threonine 183, asparagine 231, arginine 236, and 247–249; these read YE and SAK.

It belongs to the MsrP family. As to quaternary structure, heterodimer of a catalytic subunit (MsrP) and a heme-binding subunit (MsrQ). The cofactor is Mo-molybdopterin. Predicted to be exported by the Tat system. The position of the signal peptide cleavage has not been experimentally proven.

The protein localises to the periplasm. It catalyses the reaction L-methionyl-[protein] + a quinone + H2O = L-methionyl-(S)-S-oxide-[protein] + a quinol. It carries out the reaction L-methionyl-[protein] + a quinone + H2O = L-methionyl-(R)-S-oxide-[protein] + a quinol. Part of the MsrPQ system that repairs oxidized periplasmic proteins containing methionine sulfoxide residues (Met-O), using respiratory chain electrons. Thus protects these proteins from oxidative-stress damage caused by reactive species of oxygen and chlorine generated by the host defense mechanisms. MsrPQ is essential for the maintenance of envelope integrity under bleach stress, rescuing a wide series of structurally unrelated periplasmic proteins from methionine oxidation. The catalytic subunit MsrP is non-stereospecific, being able to reduce both (R-) and (S-) diastereoisomers of methionine sulfoxide. In Burkholderia mallei (strain ATCC 23344), this protein is Protein-methionine-sulfoxide reductase catalytic subunit MsrP.